The following is a 584-amino-acid chain: 2-succinyl-5-enolpyruvyl-6-hydroxy-3-cyclohexene-1-carboxylate synthase (584 aa).

The protein belongs to the TPP enzyme family. MenD subfamily. As to quaternary structure, homodimer. Mg(2+) is required as a cofactor. The cofactor is Mn(2+). Requires thiamine diphosphate as cofactor.

It carries out the reaction isochorismate + 2-oxoglutarate + H(+) = 5-enolpyruvoyl-6-hydroxy-2-succinyl-cyclohex-3-ene-1-carboxylate + CO2. It participates in quinol/quinone metabolism; 1,4-dihydroxy-2-naphthoate biosynthesis; 1,4-dihydroxy-2-naphthoate from chorismate: step 2/7. The protein operates within quinol/quinone metabolism; menaquinone biosynthesis. Its function is as follows. Catalyzes the thiamine diphosphate-dependent decarboxylation of 2-oxoglutarate and the subsequent addition of the resulting succinic semialdehyde-thiamine pyrophosphate anion to isochorismate to yield 2-succinyl-5-enolpyruvyl-6-hydroxy-3-cyclohexene-1-carboxylate (SEPHCHC). This chain is 2-succinyl-5-enolpyruvyl-6-hydroxy-3-cyclohexene-1-carboxylate synthase, found in Bacillus anthracis.